Reading from the N-terminus, the 347-residue chain is Ribosomal RNA small subunit methyltransferase C (347 aa).

This sequence belongs to the methyltransferase superfamily. RsmC family. As to quaternary structure, monomer.

The protein resides in the cytoplasm. The enzyme catalyses guanosine(1207) in 16S rRNA + S-adenosyl-L-methionine = N(2)-methylguanosine(1207) in 16S rRNA + S-adenosyl-L-homocysteine + H(+). In terms of biological role, specifically methylates the guanine in position 1207 of 16S rRNA in the 30S particle. This Shewanella baltica (strain OS185) protein is Ribosomal RNA small subunit methyltransferase C.